A 420-amino-acid chain; its full sequence is Probable glucuronosyltransferase Os04g0398600 (420 aa).

Topologically, residues 1–4 are cytoplasmic; the sequence is MGSR. The helical; Signal-anchor for type II membrane protein transmembrane segment at 5 to 25 threads the bilayer; the sequence is TVGWWLLAAAVVLAAAAADSG. Over 26–420 the chain is Lumenal; that stretch reads EAERAAEQHS…AGPVGDLKAW (395 aa). Asn-147 and Asn-408 each carry an N-linked (GlcNAc...) asparagine glycan.

Belongs to the glycosyltransferase 47 family.

Its subcellular location is the golgi apparatus membrane. Functionally, involved in the synthesis of glucuronoxylan hemicellulose in secondary cell walls. This is Probable glucuronosyltransferase Os04g0398600 from Oryza sativa subsp. japonica (Rice).